The following is a 443-amino-acid chain: MQVTETLNEGLKRGYAIKVTAAELDAKVNEKLAEAQPEVEMKGFRKGKVPMALLKKQFGQKVMGEAMQESIDGAMNDHFTSSGDRPAMQPEVKMTNENWKEGDDIEVSMSYEALPDIPDVDFSAIELERMTVKADDAAIDEALGSLAETAQNFENRKKGSKAKDGDQIVMDFLGKVDGEAFDGGAAEDYPLVLGSNSFIPGFEEQLVGVKAGEEKAVTVTFPENYQAENLAGKEAVFECTVKEVKKPVPAEIDDELAKKFGAEDLAALKGQIAERLEAEYAGAARAIMKRSLLDALDDIVDFDLPPSLVSAEAGQIAHQLWHEENPDVQGHDHPEITPTEEHTKLAERRVRLGLLLADIGQKAKVEVTDAEMSQAIMNQARQYPGQERQFFEFVQQNQQMQQQMRAPIFEDKVVDHVFAGAKVTEKEVSKDDLQKAVEALEEE.

The 86-residue stretch at 165–250 folds into the PPIase FKBP-type domain; it reads GDQIVMDFLG…VKEVKKPVPA (86 aa).

It belongs to the FKBP-type PPIase family. Tig subfamily.

Its subcellular location is the cytoplasm. The enzyme catalyses [protein]-peptidylproline (omega=180) = [protein]-peptidylproline (omega=0). Involved in protein export. Acts as a chaperone by maintaining the newly synthesized protein in an open conformation. Functions as a peptidyl-prolyl cis-trans isomerase. The polypeptide is Trigger factor (Roseobacter denitrificans (strain ATCC 33942 / OCh 114) (Erythrobacter sp. (strain OCh 114))).